The primary structure comprises 184 residues: Gremlin-1 (184 aa).

The N-terminal stretch at 1–24 (MVRTLYAIGAVFLLTGFLLPTAEG) is a signal peptide. Residues 24–77 (GRKRNRGSQGAIPPPDKDQPNDSEQMQTQQQSGSRHRERGKGTSMPAEEVLESS) form a disordered region. Asn44 carries N-linked (GlcNAc...) asparagine glycosylation. Over residues 45–56 (DSEQMQTQQQSG) the composition is skewed to polar residues. 4 cysteine pairs are disulfide-bonded: Cys94-Cys144, Cys108-Cys158, Cys118-Cys176, and Cys122-Cys178. The 91-residue stretch at 94–184 (CKTQPLKQTI…ECRCISIDLD (91 aa)) folds into the CTCK domain.

Belongs to the DAN family.

Its subcellular location is the secreted. Functionally, cytokine that may play a role in the development of the medial pallium and during optic nerve and pecten development by modulating BMP signaling. The sequence is that of Gremlin-1 (GREM1) from Gallus gallus (Chicken).